We begin with the raw amino-acid sequence, 1248 residues long: Cullin-associated NEDD8-dissociated protein 1 (1248 aa).

11 HEAT repeats span residues 44–82 (DESE…KVKE), 127–165 (PNVC…RFGE), 168–206 (VPFH…QANS), 365–403 (EDFY…NTRL), 425–463 (IEQL…SLPG), 510–548 (HPHI…VIRP), 604–642 (QNEL…LRID), 644–682 (TPIL…NYSS), 861–900 (DLSS…GSLQ), 976–1014 (LVNP…DQPQ), and 1054–1093 (PSLV…TVDD).

Belongs to the CAND family.

Key assembly factor of SCF (SKP1-CUL1-F-box protein) E3 ubiquitin ligase complexes that promotes the exchange of the substrate-recognition F-box subunit in SCF complexes, thereby playing a key role in the cellular repertoire of SCF complexes. Acts as a F-box protein exchange factor. Probably plays a similar role in other cullin-RING E3 ubiquitin ligase complexes. This is Cullin-associated NEDD8-dissociated protein 1 (Cand1) from Drosophila melanogaster (Fruit fly).